The primary structure comprises 315 residues: Olfactory receptor 11A1 (315 aa).

The Extracellular portion of the chain corresponds to 1 to 27 (MEIVSTGNETITEFVLLGFYDIPELHF). An N-linked (GlcNAc...) asparagine glycan is attached at asparagine 8. Residues 28-48 (LFFIVFTAVYVFIIIGNMLII) form a helical membrane-spanning segment. Over 49-56 (VAVVSSQR) the chain is Cytoplasmic. Residues 57–77 (LHKPMYIFLANLSFLDILYTS) traverse the membrane as a helical segment. The Extracellular portion of the chain corresponds to 78–100 (AVMPKMLEGFLQEATISVAGCLL). The cysteines at positions 98 and 190 are disulfide-linked. A helical transmembrane segment spans residues 101 to 121 (QFFIFGSLATAECLLLAVMAY). Residues 122–140 (DRYLAICYPLHYPLLMGPR) are Cytoplasmic-facing. The chain crosses the membrane as a helical span at residues 141–161 (RYMGLVVTTWLSGFVVDGLVV). At 162 to 198 (ALVAQLRFCGPNHIDQFYCDFMLFVGLACSDPRVAQV) the chain is on the extracellular side. Residues 199–218 (TTLILSVFCLTIPFGLILTS) form a helical membrane-spanning segment. Residues 219–238 (YARIVVAVLRVPAGASRRRA) lie on the Cytoplasmic side of the membrane. Residues 239–259 (FSTCSSHLAVVTTFYGTLMIF) traverse the membrane as a helical segment. Topologically, residues 260–272 (YVAPSAVHSQLLS) are extracellular. A helical transmembrane segment spans residues 273 to 293 (KVFSLLYTVVTPLFNPVIYTM). Topologically, residues 294–315 (RNKEVHQALRKILCIKQTETLD) are cytoplasmic.

The protein belongs to the G-protein coupled receptor 1 family.

It is found in the cell membrane. Odorant receptor. This chain is Olfactory receptor 11A1 (OR11A1), found in Homo sapiens (Human).